Consider the following 464-residue polypeptide: Argininosuccinate lyase (464 aa).

It belongs to the lyase 1 family. Argininosuccinate lyase subfamily.

The protein resides in the cytoplasm. It carries out the reaction 2-(N(omega)-L-arginino)succinate = fumarate + L-arginine. It functions in the pathway amino-acid biosynthesis; L-arginine biosynthesis; L-arginine from L-ornithine and carbamoyl phosphate: step 3/3. In Pseudomonas savastanoi pv. phaseolicola (strain 1448A / Race 6) (Pseudomonas syringae pv. phaseolicola (strain 1448A / Race 6)), this protein is Argininosuccinate lyase.